A 581-amino-acid chain; its full sequence is Pectinesterase 3 (581 aa).

The first 55 residues, methionine 1 to arginine 55, serve as a signal peptide directing secretion. 5 N-linked (GlcNAc...) asparagine glycosylation sites follow: asparagine 101, asparagine 156, asparagine 200, asparagine 217, and asparagine 268. Threonine 348 and glutamine 378 together coordinate substrate. The active-site Proton donor is aspartate 401. A disulfide bridge connects residues cysteine 415 and cysteine 435. The active-site Nucleophile is the aspartate 422. Asparagine 477 carries an N-linked (GlcNAc...) asparagine glycan. Positions 486 and 488 each coordinate substrate.

In the N-terminal section; belongs to the PMEI family. This sequence in the C-terminal section; belongs to the pectinesterase family.

The protein resides in the secreted. Its subcellular location is the cell wall. It carries out the reaction [(1-&gt;4)-alpha-D-galacturonosyl methyl ester](n) + n H2O = [(1-&gt;4)-alpha-D-galacturonosyl](n) + n methanol + n H(+). It functions in the pathway glycan metabolism; pectin degradation; 2-dehydro-3-deoxy-D-gluconate from pectin: step 1/5. Functionally, may have roles in the deposition of pectin in developing tissues and in the wall loosening and cell separation that occurs in cell expansion, fruit ripening and abscission. The polypeptide is Pectinesterase 3 (MPE3) (Phaseolus vulgaris (Kidney bean)).